The following is a 248-amino-acid chain: Meiotically up-regulated gene 110 protein (248 aa).

Residues 23–43 traverse the membrane as a helical segment; that stretch reads LRFVFWFSVLIPIFFIALIII.

It localises to the membrane. Has a role in meiosis. This chain is Meiotically up-regulated gene 110 protein (mug110), found in Schizosaccharomyces pombe (strain 972 / ATCC 24843) (Fission yeast).